The following is a 134-amino-acid chain: Transcription antitermination protein NusB (134 aa).

This sequence belongs to the NusB family.

Involved in transcription antitermination. Required for transcription of ribosomal RNA (rRNA) genes. Binds specifically to the boxA antiterminator sequence of the ribosomal RNA (rrn) operons. This is Transcription antitermination protein NusB from Shewanella sediminis (strain HAW-EB3).